Reading from the N-terminus, the 117-residue chain is Large ribosomal subunit protein bL31B (117 aa).

Positions 75-117 (KRFERKKEASPADTPPESDSTTENASVEKKAEKKRVTAKGSKK) are disordered. A compositionally biased stretch (basic and acidic residues) spans 100-109 (SVEKKAEKKR).

Belongs to the bacterial ribosomal protein bL31 family. Type B subfamily. In terms of assembly, part of the 50S ribosomal subunit.

In Protochlamydia amoebophila (strain UWE25), this protein is Large ribosomal subunit protein bL31B.